Here is an 835-residue protein sequence, read N- to C-terminus: Probable alpha-glucuronidase A (835 aa).

The first 18 residues, 1-18 (MRWSFLTVLLWLVSLTGA), serve as a signal peptide directing secretion. Asn-49, Asn-101, Asn-148, Asn-221, Asn-278, Asn-309, Asn-342, Asn-460, Asn-522, Asn-571, Asn-677, and Asn-727 each carry an N-linked (GlcNAc...) asparagine glycan.

This sequence belongs to the glycosyl hydrolase 67 family.

It is found in the secreted. It catalyses the reaction an alpha-D-glucuronoside + H2O = D-glucuronate + an alcohol. Its function is as follows. Alpha-glucuronidase involved in the hydrolysis of xylan, a major structural heterogeneous polysaccharide found in plant biomass representing the second most abundant polysaccharide in the biosphere, after cellulose. Releases 4-O-methylglucuronic acid from xylan. This is Probable alpha-glucuronidase A (aguA) from Aspergillus oryzae (strain ATCC 42149 / RIB 40) (Yellow koji mold).